Reading from the N-terminus, the 201-residue chain is UPF0301 protein CE2927 (201 aa).

This sequence belongs to the UPF0301 (AlgH) family.

This chain is UPF0301 protein CE2927, found in Corynebacterium efficiens (strain DSM 44549 / YS-314 / AJ 12310 / JCM 11189 / NBRC 100395).